The primary structure comprises 350 residues: MRASQSPMLDPRARQLLRTLIARYIRDGEPVGSKTLAQHAGLDVSPATIRNILADLEDVGLLSSPHTSAGRVPTAHGYRVFVDSLVQMQPPGEEEVRRLRAELASGNGTQSLLGSASQMLSAMSHFVGVVSAPRREQFAFRHIDFVALDARRVLAILVFADNEVQNRVIEPRRAYEPAELERVANYLNAQFAGRALADIRACLLRELRMAKSEMEQLLAHSVELASEALVPADADDMVMAGQTRLMGVQDLSDLDRLRELFEAFASKREILQLLERTIQAPGVRIFIGEETGMVSLEDVSLVTAPYAANGQVLGVLGVIGPKRMAYDRLIPLVQTAADVLGAAMQSPGAR.

The protein belongs to the HrcA family.

Its function is as follows. Negative regulator of class I heat shock genes (grpE-dnaK-dnaJ and groELS operons). Prevents heat-shock induction of these operons. The sequence is that of Heat-inducible transcription repressor HrcA from Xanthomonas axonopodis pv. citri (strain 306).